Reading from the N-terminus, the 452-residue chain is tRNA modification GTPase MnmE (452 aa).

Residues Arg21, Glu78, and Lys118 each coordinate (6S)-5-formyl-5,6,7,8-tetrahydrofolate. The 162-residue stretch at 214–375 (GMKVVIAGRP…LREHLKQAMG (162 aa)) folds into the TrmE-type G domain. K(+) is bound at residue Asn224. Residues 224–229 (NAGKSS), 243–249 (TDIAGTT), and 268–271 (DTAG) each bind GTP. Ser228 serves as a coordination point for Mg(2+). 3 residues coordinate K(+): Thr243, Ile245, and Thr248. Position 249 (Thr249) interacts with Mg(2+). Lys452 contacts (6S)-5-formyl-5,6,7,8-tetrahydrofolate.

The protein belongs to the TRAFAC class TrmE-Era-EngA-EngB-Septin-like GTPase superfamily. TrmE GTPase family. In terms of assembly, homodimer. Heterotetramer of two MnmE and two MnmG subunits. It depends on K(+) as a cofactor.

It is found in the cytoplasm. In terms of biological role, exhibits a very high intrinsic GTPase hydrolysis rate. Involved in the addition of a carboxymethylaminomethyl (cmnm) group at the wobble position (U34) of certain tRNAs, forming tRNA-cmnm(5)s(2)U34. The polypeptide is tRNA modification GTPase MnmE (Haemophilus influenzae (strain PittEE)).